Consider the following 345-residue polypeptide: Phosphoribosylformylglycinamidine cyclo-ligase (345 aa).

It belongs to the AIR synthase family.

It is found in the cytoplasm. It catalyses the reaction 2-formamido-N(1)-(5-O-phospho-beta-D-ribosyl)acetamidine + ATP = 5-amino-1-(5-phospho-beta-D-ribosyl)imidazole + ADP + phosphate + H(+). It participates in purine metabolism; IMP biosynthesis via de novo pathway; 5-amino-1-(5-phospho-D-ribosyl)imidazole from N(2)-formyl-N(1)-(5-phospho-D-ribosyl)glycinamide: step 2/2. The sequence is that of Phosphoribosylformylglycinamidine cyclo-ligase from Pasteurella multocida (strain Pm70).